Here is a 69-residue protein sequence, read N- to C-terminus: uncharacterized protein (69 aa).

Over 1-15 (MLLYIVIIVACIISK) the chain is Cytoplasmic. The chain crosses the membrane as a helical span at residues 16–36 (LVPNEYWAIHLFFIIMIFMVY). Over 37 to 69 (MYKKLDIHQKYQFWNYTMSGLSGHNVQVTCKCY) the chain is Extracellular. A glycan (N-linked (GlcNAc...) asparagine; by host) is linked at Asn-51.

This sequence belongs to the asfivirus X69R family.

It is found in the host membrane. This is an uncharacterized protein from African swine fever virus (isolate Tick/Malawi/Lil 20-1/1983) (ASFV).